A 250-amino-acid chain; its full sequence is Flavin-dependent thymidylate synthase (250 aa).

Residues 7–233 (LRVQLIAKTD…PSIFGDFDIA (227 aa)) enclose the ThyX domain. FAD is bound by residues serine 71, 95–97 (RHR), and glutamine 103. DUMP-binding positions include 92–95 (ELIR), 103–107 (QLSQR), and arginine 172. The short motif at 95–105 (RHRHFSYSQLS) is the ThyX motif element. FAD contacts are provided by residues 188–190 (NYR) and histidine 194. DUMP is bound at residue arginine 199. Arginine 199 serves as the catalytic Involved in ionization of N3 of dUMP, leading to its activation.

Belongs to the thymidylate synthase ThyX family. Homotetramer. FAD is required as a cofactor.

It catalyses the reaction dUMP + (6R)-5,10-methylene-5,6,7,8-tetrahydrofolate + NADPH + H(+) = dTMP + (6S)-5,6,7,8-tetrahydrofolate + NADP(+). It participates in pyrimidine metabolism; dTTP biosynthesis. Its function is as follows. Catalyzes the reductive methylation of 2'-deoxyuridine-5'-monophosphate (dUMP) to 2'-deoxythymidine-5'-monophosphate (dTMP) while utilizing 5,10-methylenetetrahydrofolate (mTHF) as the methyl donor, and NADPH and FADH(2) as the reductant. The protein is Flavin-dependent thymidylate synthase of Mycobacteroides abscessus (strain ATCC 19977 / DSM 44196 / CCUG 20993 / CIP 104536 / JCM 13569 / NCTC 13031 / TMC 1543 / L948) (Mycobacterium abscessus).